Reading from the N-terminus, the 328-residue chain is Chlorate reductase subunit beta (328 aa).

4Fe-4S ferredoxin-type domains lie at Val6–Arg35, Asn125–Glu156, and Gly158–Gln187. Cys15, Cys18, Cys21, Cys25, Cys134, Cys137, and Cys142 together coordinate [4Fe-4S] cluster. Residues Cys146, Cys167, and Cys173 each coordinate [3Fe-4S] cluster. [4Fe-4S] cluster is bound by residues Cys177, Cys194, Cys197, Cys209, and Cys213.

In terms of assembly, heterotrimer of alpha, beta and gamma subunits. [3Fe-4S] cluster serves as cofactor. Requires [4Fe-4S] cluster as cofactor.

Its subcellular location is the periplasm. Electron transfer subunit of the terminal reductase during anaerobic growth on chlorate. The polypeptide is Chlorate reductase subunit beta (clrB) (Ideonella dechloratans).